Consider the following 511-residue polypeptide: DEP domain-containing protein 7 (511 aa).

The 91-residue stretch at 46 to 136 folds into the DEP domain; sequence LQTQVEVKKR…SSCSLYRFTT (91 aa).

The protein belongs to the DEPDC7 family.

The protein is DEP domain-containing protein 7 (DEPDC7) of Pongo abelii (Sumatran orangutan).